The following is a 174-amino-acid chain: Phospholipase A2-like protein Y52B11A.8 (174 aa).

An N-terminal signal peptide occupies residues 1–18 (MRGLLVATWIFVSVAASA). Residues N49 and N143 are each glycosylated (N-linked (GlcNAc...) asparagine). The tract at residues 137–174 (YEASGPNASTTEESPAEKDDYDYESHVAGLNATPSSST) is disordered.

This sequence belongs to the phospholipase A2 family.

Its subcellular location is the secreted. This chain is Phospholipase A2-like protein Y52B11A.8, found in Caenorhabditis elegans.